Consider the following 361-residue polypeptide: Alanine racemase 2 (361 aa).

Residue Lys30 is the Proton acceptor; specific for D-alanine of the active site. N6-(pyridoxal phosphate)lysine is present on Lys30. Arg122 contacts substrate. The active-site Proton acceptor; specific for L-alanine is the Tyr256. Residue Met303 coordinates substrate.

It belongs to the alanine racemase family. It depends on pyridoxal 5'-phosphate as a cofactor.

The catalysed reaction is L-alanine = D-alanine. Its pathway is amino-acid biosynthesis; D-alanine biosynthesis; D-alanine from L-alanine: step 1/1. In terms of biological role, catalyzes the interconversion of L-alanine and D-alanine. May also act on other amino acids. The sequence is that of Alanine racemase 2 (alr2) from Staphylococcus aureus (strain Mu50 / ATCC 700699).